We begin with the raw amino-acid sequence, 78 residues long: Probable Fe(2+)-trafficking protein (78 aa).

It belongs to the Fe(2+)-trafficking protein family. In terms of assembly, monomer.

Could be a mediator in iron transactions between iron acquisition and iron-requiring processes, such as synthesis and/or repair of Fe-S clusters in biosynthetic enzymes. The sequence is that of Probable Fe(2+)-trafficking protein from Wigglesworthia glossinidia brevipalpis.